A 248-amino-acid polypeptide reads, in one-letter code: Transcription factor bHLH35 (248 aa).

Residues 37-54 (SGSYDSSSPDGAASSPAS) show a composition bias toward low complexity. Positions 37 to 60 (SGSYDSSSPDGAASSPASKNIVSE) are disordered. The bHLH domain maps to 51 to 100 (SPASKNIVSERNRRQKLNQRLFALRSVVPNITKMDKASIIKDAISYIEGL).

As to quaternary structure, homodimer. In terms of tissue distribution, expressed constitutively in roots, leaves, stems, and flowers.

Its subcellular location is the nucleus. This Arabidopsis thaliana (Mouse-ear cress) protein is Transcription factor bHLH35 (BHLH35).